A 319-amino-acid polypeptide reads, in one-letter code: 1-aminocyclopropane-1-carboxylate oxidase (319 aa).

The Fe2OG dioxygenase domain maps to G152 to P253. H177, D179, and H234 together coordinate Fe cation.

Belongs to the iron/ascorbate-dependent oxidoreductase family. It depends on Fe cation as a cofactor.

It catalyses the reaction 1-aminocyclopropane-1-carboxylate + L-ascorbate + O2 = ethene + L-dehydroascorbate + hydrogen cyanide + CO2 + 2 H2O. It participates in alkene biosynthesis; ethylene biosynthesis via S-adenosyl-L-methionine; ethylene from S-adenosyl-L-methionine: step 2/2. In Nicotiana tabacum (Common tobacco), this protein is 1-aminocyclopropane-1-carboxylate oxidase (ACO).